Here is a 442-residue protein sequence, read N- to C-terminus: MDPQNLSMYNDDINNGTNGTAVDQKPHYNYYAMLLTLLVFVIVFGNVLVCIAVSREKALQTTTNYLIVSLAVADLLVATLVMPWAVYMEVVGEWRFSRIHCDIFVTLDVMMCTASILNLCAISIDRYTAVAMPMLYNTRYSSKRRVTVMISVVWVLSFAISCPLLFGLNNTGSKVCIIDNPAFVIYSSIVSFYVPFIVTLLVYVQIYIVLRKRRKRVNTKRNSRGVAVDAHKDKCTHPEDVKLCSVFVKSNGSFPADKKKVILVQEAGKHPEDMEMEMMSSTSPPEKTKHKSASPDHNQLAVPATSNQCKNASLTSPVESPYKAEKNGHPKDSTKPAKVFEIQSMPNGKTRTSIKTMSKKKLSQHKEKKATQMLAIVLGVFIICWLPFFIIHILNMHCNCNIPQALYSAFTWLGYVNSAVNPIIYTTFNVEFRKAFIKILHC.

Over 1 to 31 (MDPQNLSMYNDDINNGTNGTAVDQKPHYNYY) the chain is Extracellular. N-linked (GlcNAc...) asparagine glycans are attached at residues Asn5, Asn15, and Asn18. Residues 32–54 (AMLLTLLVFVIVFGNVLVCIAVS) traverse the membrane as a helical segment. Residues 55-64 (REKALQTTTN) are Cytoplasmic-facing. The chain crosses the membrane as a helical span at residues 65–87 (YLIVSLAVADLLVATLVMPWAVY). The Extracellular portion of the chain corresponds to 88 to 102 (MEVVGEWRFSRIHCD). A disulfide bond links Cys101 and Cys176. The helical transmembrane segment at 103–124 (IFVTLDVMMCTASILNLCAISI) threads the bilayer. Residues 125–145 (DRYTAVAMPMLYNTRYSSKRR) are Cytoplasmic-facing. Residues 146 to 166 (VTVMISVVWVLSFAISCPLLF) form a helical membrane-spanning segment. Residues 167–182 (GLNNTGSKVCIIDNPA) are Extracellular-facing. The chain crosses the membrane as a helical span at residues 183–207 (FVIYSSIVSFYVPFIVTLLVYVQIY). Residues 208–372 (IVLRKRRKRV…SQHKEKKATQ (165 aa)) lie on the Cytoplasmic side of the membrane. The tract at residues 273-335 (DMEMEMMSST…KNGHPKDSTK (63 aa)) is disordered. The segment covering 304 to 318 (ATSNQCKNASLTSPV) has biased composition (polar residues). Residues 322–335 (YKAEKNGHPKDSTK) show a composition bias toward basic and acidic residues. The chain crosses the membrane as a helical span at residues 373 to 394 (MLAIVLGVFIICWLPFFIIHIL). The Extracellular segment spans residues 395 to 408 (NMHCNCNIPQALYS). The cysteines at positions 398 and 400 are disulfide-linked. A helical membrane pass occupies residues 409–430 (AFTWLGYVNSAVNPIIYTTFNV). The Cytoplasmic portion of the chain corresponds to 431–442 (EFRKAFIKILHC). Cys442 carries S-palmitoyl cysteine lipidation.

The protein belongs to the G-protein coupled receptor 1 family. Palmitoylated. Palmitoylation is probably required for proper localization to the plasma membrane and stability of the receptor. As to expression, brain; pituitary.

The protein localises to the cell membrane. It is found in the golgi apparatus membrane. In terms of biological role, this is one of the five types (D1 to D5) of receptors for dopamine. The activity of this receptor is mediated by G proteins which inhibits adenylyl cyclase. In Xenopus D2R is involved in the regulation of the melanotrope cells of the intermediate pituitary during background adaptation of the animal. In Xenopus laevis (African clawed frog), this protein is D(2) dopamine receptor A (drd2-a).